The primary structure comprises 341 residues: Ribulose-5-phosphate reductase 2 (341 aa).

Zn(2+)-binding residues include cysteine 38, histidine 64, glutamate 65, and glutamate 144.

Belongs to the zinc-containing alcohol dehydrogenase family. Heterodimer together with TarI. The cofactor is Zn(2+).

It carries out the reaction D-ribitol 5-phosphate + NADP(+) = D-ribulose 5-phosphate + NADPH + H(+). It participates in cell wall biogenesis; poly(ribitol phosphate) teichoic acid biosynthesis. Catalyzes the NADPH dependent reduction of D-ribulose 5-phosphate to D-ribitol 5-phosphate. This is Ribulose-5-phosphate reductase 2 from Staphylococcus aureus (strain NCTC 8325 / PS 47).